The chain runs to 181 residues: Small ribosomal subunit protein uS4 (181 aa).

An S4 RNA-binding domain is found at 104-172 (RRLQTIVYKK…SRPPVMSQQE (69 aa)).

Belongs to the universal ribosomal protein uS4 family. In terms of assembly, part of the 30S ribosomal subunit. Contacts protein S5. The interaction surface between S4 and S5 is involved in control of translational fidelity.

One of the primary rRNA binding proteins, it binds directly to 16S rRNA where it nucleates assembly of the body of the 30S subunit. Functionally, with S5 and S12 plays an important role in translational accuracy. In Saccharolobus solfataricus (strain ATCC 35092 / DSM 1617 / JCM 11322 / P2) (Sulfolobus solfataricus), this protein is Small ribosomal subunit protein uS4.